Reading from the N-terminus, the 469-residue chain is uncharacterized protein (469 aa).

Positions Met1–Gly19 are cleaved as a signal peptide. Transmembrane regions (helical) follow at residues Ile199 to Leu219, Ala236 to Ile256, Ala283 to Val303, Tyr305 to Leu325, Ile338 to Ala358, Ile386 to Leu406, and Gly413 to Phe433.

The protein localises to the membrane. This is an uncharacterized protein from Schizosaccharomyces pombe (strain 972 / ATCC 24843) (Fission yeast).